The sequence spans 268 residues: Trans-aconitate 2-methyltransferase (268 aa).

This sequence belongs to the methyltransferase superfamily. Tam family.

It localises to the cytoplasm. It catalyses the reaction trans-aconitate + S-adenosyl-L-methionine = (E)-3-(methoxycarbonyl)pent-2-enedioate + S-adenosyl-L-homocysteine. Catalyzes the S-adenosylmethionine monomethyl esterification of trans-aconitate. The sequence is that of Trans-aconitate 2-methyltransferase from Delftia acidovorans (strain DSM 14801 / SPH-1).